The following is a 356-amino-acid chain: MSKEDAMSTGDSTESLDIDCLDDGDSEVVSSLQHLADDKLHISDNRDVAGVASKWTKHGCNSVEIDYIVDIDNNHEDPQLCATLAFDIYKHLRVAETKKRPSTDFVETIQKNIDTSMRAVLIDWLVEVTEEYRLVPETLYLTVNYIDRYLSSKVINRRKMQLLGVACLLIASKYEEICPPQVEELCYISDNTYTKDEVLKMEASVLKYLKFEMTAPTTKCFLRRFLRAAQVCHEAPVLHLEFLANYIAELSLLEYSLICYVPSLIAASSIFLAKFILKPTENPWNSTLSFYTQYKPSDLCNCAKGLHRLFLVGPGGNLRAVREKYSQHKYKFVAKKYSPPSIPAEFFEDPSSYKPD.

This sequence belongs to the cyclin family. Cyclin AB subfamily.

The sequence is that of Cyclin-A1-4 (CYCA1-4) from Oryza sativa subsp. japonica (Rice).